The chain runs to 367 residues: Glutamate 5-kinase (367 aa).

Lys10 is a binding site for ATP. Ser50, Asp137, and Asn149 together coordinate substrate. ATP is bound by residues 169–170 (TD) and 211–217 (TGGMGTK). Positions 275–353 (AGEITVDDGA…QEISEILGYE (79 aa)) constitute a PUA domain.

It belongs to the glutamate 5-kinase family.

The protein resides in the cytoplasm. It catalyses the reaction L-glutamate + ATP = L-glutamyl 5-phosphate + ADP. Its pathway is amino-acid biosynthesis; L-proline biosynthesis; L-glutamate 5-semialdehyde from L-glutamate: step 1/2. With respect to regulation, proline-mediated feedback inhibition. Its function is as follows. Catalyzes the transfer of a phosphate group to glutamate to form L-glutamate 5-phosphate. The chain is Glutamate 5-kinase from Serratia marcescens.